The primary structure comprises 240 residues: Probable Ni/Fe-hydrogenase B-type cytochrome subunit (240 aa).

4 consecutive transmembrane segments (helical) span residues Leu31 to Gly51, Phe75 to Gly95, Leu142 to Tyr163, and Leu196 to Ala213.

It belongs to the HupC/HyaC/HydC family.

Its subcellular location is the cell membrane. Functionally, probable b-type cytochrome. The chain is Probable Ni/Fe-hydrogenase B-type cytochrome subunit (hupZ) from Azotobacter chroococcum mcd 1.